The chain runs to 416 residues: Multifunctional CCA protein (416 aa).

Glycine 8 and arginine 11 together coordinate ATP. The CTP site is built by glycine 8 and arginine 11. Residues glutamate 21 and aspartate 23 each contribute to the Mg(2+) site. ATP is bound by residues arginine 91, arginine 137, and arginine 140. CTP contacts are provided by arginine 91, arginine 137, and arginine 140. Residues 228–329 (TGIHTLMVLK…LKLFDAVDAW (102 aa)) form the HD domain.

This sequence belongs to the tRNA nucleotidyltransferase/poly(A) polymerase family. Bacterial CCA-adding enzyme type 1 subfamily. In terms of assembly, monomer. Can also form homodimers and oligomers. It depends on Mg(2+) as a cofactor. Ni(2+) is required as a cofactor.

It catalyses the reaction a tRNA precursor + 2 CTP + ATP = a tRNA with a 3' CCA end + 3 diphosphate. It carries out the reaction a tRNA with a 3' CCA end + 2 CTP + ATP = a tRNA with a 3' CCACCA end + 3 diphosphate. Its function is as follows. Catalyzes the addition and repair of the essential 3'-terminal CCA sequence in tRNAs without using a nucleic acid template. Adds these three nucleotides in the order of C, C, and A to the tRNA nucleotide-73, using CTP and ATP as substrates and producing inorganic pyrophosphate. tRNA 3'-terminal CCA addition is required both for tRNA processing and repair. Also involved in tRNA surveillance by mediating tandem CCA addition to generate a CCACCA at the 3' terminus of unstable tRNAs. While stable tRNAs receive only 3'-terminal CCA, unstable tRNAs are marked with CCACCA and rapidly degraded. This chain is Multifunctional CCA protein, found in Photorhabdus laumondii subsp. laumondii (strain DSM 15139 / CIP 105565 / TT01) (Photorhabdus luminescens subsp. laumondii).